The sequence spans 718 residues: SANT and BTB domain regulator of class switch recombination (718 aa).

Residues 21–59 form the SANT domain; sequence DMILYPLIGIPQTINWETIARLVPGLTPKECAKRFDELK. The span at 118–134 shows a compositional bias: polar residues; sequence ASTRNCSSESENCTTHN. The segment at 118–142 is disordered; sequence ASTRNCSSESENCTTHNGGEMTEES. The 109-residue stretch at 147–255 folds into the BTB domain; that stretch reads MVIHVCDEAK…QCIQYCHKNM (109 aa). A compositionally biased stretch (acidic residues) spans 555 to 576; it reads SEEEEYTTGSEVTEDEVGDEEE. Disordered regions lie at residues 555 to 622 and 692 to 718; these read SEEE…SPFV and SVPV…GRPA. The span at 580–595 shows a compositional bias: basic residues; that stretch reads KQRKKEKPKKFTRQPK. Positions 604-615 are enriched in basic and acidic residues; sequence QRKEKALEKSAS.

Belongs to the KIAA1841 family. In terms of assembly, homodimer. Interacts (via the BTB domain) with HDAC1 and NCOR2.

In terms of biological role, negatively regulates class switch recombination or isotype switching in splenic B-cells. The sequence is that of SANT and BTB domain regulator of class switch recombination from Homo sapiens (Human).